The following is a 206-amino-acid chain: Protein GrpE (206 aa).

Over residues 1 to 17 the composition is skewed to basic and acidic residues; it reads MSNESIKAEQDLIHEGV. The interval 1–20 is disordered; sequence MSNESIKAEQDLIHEGVESE.

Belongs to the GrpE family. In terms of assembly, homodimer.

The protein localises to the cytoplasm. Functionally, participates actively in the response to hyperosmotic and heat shock by preventing the aggregation of stress-denatured proteins, in association with DnaK and GrpE. It is the nucleotide exchange factor for DnaK and may function as a thermosensor. Unfolded proteins bind initially to DnaJ; upon interaction with the DnaJ-bound protein, DnaK hydrolyzes its bound ATP, resulting in the formation of a stable complex. GrpE releases ADP from DnaK; ATP binding to DnaK triggers the release of the substrate protein, thus completing the reaction cycle. Several rounds of ATP-dependent interactions between DnaJ, DnaK and GrpE are required for fully efficient folding. This is Protein GrpE from Shewanella oneidensis (strain ATCC 700550 / JCM 31522 / CIP 106686 / LMG 19005 / NCIMB 14063 / MR-1).